The primary structure comprises 892 residues: Translation initiation factor IF-2 (892 aa).

Over residues 138–185 (QRNLAEQQRLAEVDRQRVEEQERKRREEEQAELERQKTESRVVEEILV) the composition is skewed to basic and acidic residues. 2 disordered regions span residues 138-250 (QRNL…EDDS) and 262-298 (AAER…SGAH). Positions 207-219 (LPRTVRPTPAARP) are enriched in low complexity. The 170-residue stretch at 391 to 560 (PRPPVVTIMG…SIQAEVLELK (170 aa)) folds into the tr-type G domain. GTP is bound by residues 400 to 407 (GHVDHGKT), 446 to 450 (DTPGH), and 500 to 503 (SKID).

Belongs to the TRAFAC class translation factor GTPase superfamily. Classic translation factor GTPase family. IF-2 subfamily.

The protein resides in the cytoplasm. One of the essential components for the initiation of protein synthesis. Protects formylmethionyl-tRNA from spontaneous hydrolysis and promotes its binding to the 30S ribosomal subunits. Also involved in the hydrolysis of GTP during the formation of the 70S ribosomal complex. In Xylella fastidiosa (strain Temecula1 / ATCC 700964), this protein is Translation initiation factor IF-2.